We begin with the raw amino-acid sequence, 462 residues long: Chromosomal replication initiator protein DnaA (462 aa).

The segment at 1–84 (MAVSLWQQCI…RFDIGSRPSA (84 aa)) is domain I, interacts with DnaA modulators. The segment at 84–125 (APKPIQATAAVVKPKLESSPQKSQTSFNVNAPEPAATANHRS) is domain II. The tract at residues 126 to 342 (NINPTYQFEN…GALNRVIANA (217 aa)) is domain III, AAA+ region. Glycine 170, glycine 172, lysine 173, and threonine 174 together coordinate ATP. Positions 343 to 462 (NFTGRPITID…YANLIRTLSS (120 aa)) are domain IV, binds dsDNA.

The protein belongs to the DnaA family. As to quaternary structure, oligomerizes as a right-handed, spiral filament on DNA at oriC.

Its subcellular location is the cytoplasm. In terms of biological role, plays an essential role in the initiation and regulation of chromosomal replication. ATP-DnaA binds to the origin of replication (oriC) to initiate formation of the DNA replication initiation complex once per cell cycle. Binds the DnaA box (a 9 base pair repeat at the origin) and separates the double-stranded (ds)DNA. Forms a right-handed helical filament on oriC DNA; dsDNA binds to the exterior of the filament while single-stranded (ss)DNA is stabiized in the filament's interior. The ATP-DnaA-oriC complex binds and stabilizes one strand of the AT-rich DNA unwinding element (DUE), permitting loading of DNA polymerase. After initiation quickly degrades to an ADP-DnaA complex that is not apt for DNA replication. Binds acidic phospholipids. The polypeptide is Chromosomal replication initiator protein DnaA (Shewanella woodyi (strain ATCC 51908 / MS32)).